Consider the following 115-residue polypeptide: Evasin P1181 (115 aa).

The signal sequence occupies residues 1-25 (MALNWSFRVIFVSAMWCALLKFATL). 4 disulfide bridges follow: Cys-38–Cys-58, Cys-54–Cys-94, Cys-70–Cys-99, and Cys-89–Cys-108. N-linked (GlcNAc...) asparagine glycosylation is found at Asn-45, Asn-72, and Asn-103.

It is found in the secreted. Salivary chemokine-binding protein which binds to host chemokines CCL3 and CCL4. The chain is Evasin P1181 from Amblyomma maculatum (Gulf Coast tick).